The primary structure comprises 282 residues: Ribosomal RNA small subunit methyltransferase A (282 aa).

S-adenosyl-L-methionine is bound by residues H11, L13, G44, E65, D90, and N106.

The protein belongs to the class I-like SAM-binding methyltransferase superfamily. rRNA adenine N(6)-methyltransferase family. RsmA subfamily.

The protein localises to the cytoplasm. The enzyme catalyses adenosine(1518)/adenosine(1519) in 16S rRNA + 4 S-adenosyl-L-methionine = N(6)-dimethyladenosine(1518)/N(6)-dimethyladenosine(1519) in 16S rRNA + 4 S-adenosyl-L-homocysteine + 4 H(+). Functionally, specifically dimethylates two adjacent adenosines (A1518 and A1519) in the loop of a conserved hairpin near the 3'-end of 16S rRNA in the 30S particle. May play a critical role in biogenesis of 30S subunits. This chain is Ribosomal RNA small subunit methyltransferase A, found in Synechococcus sp. (strain JA-2-3B'a(2-13)) (Cyanobacteria bacterium Yellowstone B-Prime).